The following is a 456-amino-acid chain: uncharacterized protein (456 aa).

One can recognise a TRAM domain in the interval Thr-3 to Glu-61. Positions 74, 80, 83, and 162 each coordinate [4Fe-4S] cluster. The S-adenosyl-L-methionine site is built by Gln-286, Tyr-315, Glu-336, and Asp-384. Cys-411 functions as the Nucleophile in the catalytic mechanism.

It belongs to the class I-like SAM-binding methyltransferase superfamily. RNA M5U methyltransferase family.

This is an uncharacterized protein from Staphylococcus epidermidis (strain ATCC 35984 / DSM 28319 / BCRC 17069 / CCUG 31568 / BM 3577 / RP62A).